A 125-amino-acid chain; its full sequence is Holo-[acyl-carrier-protein] synthase (125 aa).

Residues Asp8 and Glu57 each coordinate Mg(2+).

It belongs to the P-Pant transferase superfamily. AcpS family. Requires Mg(2+) as cofactor.

The protein localises to the cytoplasm. The enzyme catalyses apo-[ACP] + CoA = holo-[ACP] + adenosine 3',5'-bisphosphate + H(+). In terms of biological role, transfers the 4'-phosphopantetheine moiety from coenzyme A to a Ser of acyl-carrier-protein. This is Holo-[acyl-carrier-protein] synthase from Blochmanniella floridana.